Reading from the N-terminus, the 371-residue chain is 3-methyl-D-ornithine--L-lysine ligase (371 aa).

Lys-18 lines the ATP pocket. Residue Leu-19 to Gln-20 participates in L-lysine binding. ATP is bound by residues Asp-39, Asn-57–Ile-58, and Glu-80–Asn-81. Position 80 (Glu-80) interacts with L-lysine. An ATP-grasp domain is found at Glu-93–Asn-277. ADP is bound by residues Lys-112, Lys-139, Ser-146, and Glu-168–Val-171. D-ornithine contacts are provided by residues Ser-177 to Glu-179 and Asp-233. Positions 235, 247, and 249 each coordinate Mg(2+). Glu-247 serves as a coordination point for ADP. D-ornithine is bound by residues Arg-251–Thr-256 and Glu-310. L-lysine contacts are provided by Ser-254 and Glu-310.

The protein belongs to the PylC family. Requires Mg(2+) as cofactor.

It catalyses the reaction (3R)-3-methyl-D-ornithine + L-lysine + ATP = (3R)-3-methyl-D-ornithyl-N(6)-L-lysine + ADP + phosphate + H(+). The protein operates within amino-acid biosynthesis; L-pyrrolysine biosynthesis. Is required for the biosynthesis of pyrrolysine. Catalyzes the ATP-dependent ligation between (3R)-3-methyl-D-ornithine and L-lysine, leading to (3R)-3-methyl-D-ornithyl-N6-L-lysine. Is also involved in the synthesis of pyrroline-carboxy-lysine (Pcl), a demethylated form of pyrrolysine that is generated by the pyrrolysine biosynthetic enzymes when the growth media is supplemented with D-ornithine. This chain is 3-methyl-D-ornithine--L-lysine ligase, found in Methanosarcina mazei (strain ATCC BAA-159 / DSM 3647 / Goe1 / Go1 / JCM 11833 / OCM 88) (Methanosarcina frisia).